The primary structure comprises 266 residues: Transcription regulator FGM4 (266 aa).

The disordered stretch occupies residues 17–36 (KTQNRLAKRKSRIHAGKQQG). The span at 18 to 31 (TQNRLAKRKSRIHA) shows a compositional bias: basic residues. 2 ANK repeats span residues 183–212 (KPGSPLHIASAMGHLKVVKTLITYGANVNE) and 216–245 (AGYSPIHYATRNNHTAIVALLLEKGADWSY).

It localises to the nucleus. Transcription regulator; part of the Fg3_54/C64 gene cluster that mediates the biosynthesis of the octapeptide fusaoctaxin A, a virulence factor that is required for cell-to-cell invasiveness of plant host. Positively regulates the expression the Fg3_54/C64 gene cluster. This Gibberella zeae (strain ATCC MYA-4620 / CBS 123657 / FGSC 9075 / NRRL 31084 / PH-1) (Wheat head blight fungus) protein is Transcription regulator FGM4.